Consider the following 489-residue polypeptide: UDP-N-acetylmuramate--L-alanine ligase (489 aa).

130–136 (GTHGKTS) is a binding site for ATP.

Belongs to the MurCDEF family.

The protein localises to the cytoplasm. The enzyme catalyses UDP-N-acetyl-alpha-D-muramate + L-alanine + ATP = UDP-N-acetyl-alpha-D-muramoyl-L-alanine + ADP + phosphate + H(+). It participates in cell wall biogenesis; peptidoglycan biosynthesis. Its function is as follows. Cell wall formation. This is UDP-N-acetylmuramate--L-alanine ligase from Corynebacterium efficiens (strain DSM 44549 / YS-314 / AJ 12310 / JCM 11189 / NBRC 100395).